Here is a 1887-residue protein sequence, read N- to C-terminus: Bifunctional serine/threonine-protein kinase/NEDD4-like E3 ubiquitin-protein ligase (1887 aa).

Disordered regions lie at residues 19 to 55 and 72 to 98; these read TPQV…TTNF and TDNY…TKEN. Low complexity-rich tracts occupy residues 26–54 and 72–97; these read NNSN…STTN and TDNY…NTKE. RCC1 repeat units follow at residues 206–260, 262–314, 356–409, 411–470, 472–528, and 529–581; these read QGNL…ALTI, GKVY…NNNN, KGLL…VLTN, GLVF…AISD, NDTY…AMSI, and DGSL…IVEK. The disordered stretch occupies residues 299-333; the sequence is NNNNNNNNNNSTNNNNNNNNDGAQQQFSLSQNSSS. Disordered regions lie at residues 594-619, 823-858, and 1030-1088; these read LPSS…SDSN, VLVH…KNGT, and DDDN…NNNN. Residues 825-839 are compositionally biased toward basic and acidic residues; that stretch reads VHQDEKQQQREKSET. The span at 840–852 shows a compositional bias: acidic residues; it reads ELEEEQDEEEEDS. The span at 1036-1088 shows a compositional bias: low complexity; it reads ENNSVNNNSNNNNNNNNNNNNNNNNNNNNNNNIDNNINSNSINDSSNNNNNNN. The Protein kinase domain maps to 1158–1437; it reads YDIIKTLSTH…AHQIAVHPYF (280 aa). ATP contacts are provided by residues 1164–1172 and Lys-1184; that span reads LSTHPHNVY. Asp-1281 acts as the Proton acceptor in catalysis. The region spanning 1501–1887 is the HECT domain; it reads ESNKLFCRLE…LEYVDGFAFI (387 aa). The interval 1586 to 1628 is disordered; the sequence is NNNNNNEENNNNNNNNNNNNNNNNNNNNNNNNNNNNNNNNNEE. Cys-1855 functions as the Glycyl thioester intermediate in the catalytic mechanism.

This sequence in the N-terminal section; belongs to the protein kinase superfamily. Ser/Thr protein kinase family. The protein in the C-terminal section; belongs to the protein kinase superfamily. CAMK Ser/Thr protein kinase family.

It catalyses the reaction L-seryl-[protein] + ATP = O-phospho-L-seryl-[protein] + ADP + H(+). The catalysed reaction is L-threonyl-[protein] + ATP = O-phospho-L-threonyl-[protein] + ADP + H(+). It carries out the reaction S-ubiquitinyl-[E2 ubiquitin-conjugating enzyme]-L-cysteine + [acceptor protein]-L-lysine = [E2 ubiquitin-conjugating enzyme]-L-cysteine + N(6)-ubiquitinyl-[acceptor protein]-L-lysine.. The protein operates within protein modification; protein ubiquitination. This is Bifunctional serine/threonine-protein kinase/NEDD4-like E3 ubiquitin-protein ligase from Dictyostelium discoideum (Social amoeba).